The following is a 1380-amino-acid chain: DNA-directed RNA polymerase subunit beta (1380 aa).

This sequence belongs to the RNA polymerase beta chain family. The RNAP catalytic core consists of 2 alpha, 1 beta, 1 beta' and 1 omega subunit. When a sigma factor is associated with the core the holoenzyme is formed, which can initiate transcription.

It catalyses the reaction RNA(n) + a ribonucleoside 5'-triphosphate = RNA(n+1) + diphosphate. Its function is as follows. DNA-dependent RNA polymerase catalyzes the transcription of DNA into RNA using the four ribonucleoside triphosphates as substrates. The polypeptide is DNA-directed RNA polymerase subunit beta (Ehrlichia chaffeensis (strain ATCC CRL-10679 / Arkansas)).